A 367-amino-acid polypeptide reads, in one-letter code: mRNA-decapping enzyme-like protein (367 aa).

Disordered regions lie at residues 144–179 (PKAS…RDAP), 196–246 (NTAS…SSSP), and 299–333 (PNNA…PTGP). The segment covering 196–211 (NTASGSASGPYQSSAI) has biased composition (polar residues). Low complexity predominate over residues 212–234 (PHQPHQPHQPTIAPPVAAAAPPQ). The segment covering 299-309 (PNNASHQQRSY) has biased composition (polar residues). Over residues 315–331 (QPFPPPTPPPSLAPAPT) the composition is skewed to pro residues.

It belongs to the DCP1 family. In terms of assembly, homodimer. Component of the decapping complex. Interacts with DCP2 and DCP5. Interacts with BCHA1. In terms of tissue distribution, expressed in seedlings, mostly in root tips, root hairs, and the vascular system. Also present in roots, leaves, stems, and flowers.

The protein localises to the cytoplasm. It is found in the P-body. Its function is as follows. As a component of the decapping complex, involved in the degradation of mRNAs. Essential for postembryonic development. The sequence is that of mRNA-decapping enzyme-like protein from Arabidopsis thaliana (Mouse-ear cress).